The primary structure comprises 445 residues: UPF0210 protein llmg_1581 (445 aa).

This sequence belongs to the UPF0210 family. In terms of assembly, homodimer.

The chain is UPF0210 protein llmg_1581 from Lactococcus lactis subsp. cremoris (strain MG1363).